Consider the following 437-residue polypeptide: Succinyl-CoA:cyclohexane-1-carboxylate CoA transferase (437 aa).

A CoA-binding site is contributed by 221–225; sequence GWGGI. The 5-glutamyl coenzyme A thioester intermediate role is filled by Glu244. Residues Leu319, Gly342, and Lys367 each coordinate CoA.

Belongs to the acetyl-CoA hydrolase/transferase family. In terms of assembly, homodimer.

The catalysed reaction is cyclohexane-1-carboxylate + succinyl-CoA = cyclohexane-1-carbonyl-CoA + succinate. It carries out the reaction cyclohexane-1-carboxylate + butanoyl-CoA = cyclohexane-1-carbonyl-CoA + butanoate. Its function is as follows. Acyl-CoA transferase involved in the anaerobic degradation of cyclohexane carboxylic acid (CHC). Catalyzes the activation of CHC to cyclohexane-1-carbonyl-CoA (CHCoA). Benzoic acid and cyclohex-1-ene-1-carboxylic acid can also be used as substrates, but with lower specific activity. Shows highest activity with succinyl-CoA and butanoyl-coA as a CoA donor, and lower activity with crotonyl-CoA, acetyl-CoA, glutaryl-CoA, CH1eneCoA, propionyl-CoA and acetoacetyl-CoA. In vitro, the enzyme can use butanoyl-coA as a CoA donor with greater efficiency than succinyl-CoA. However, succinyl-CoA is the most abundant CoA ester in exponentially grown cells, whereas butanoyl-coA is hardly detectable, indicating that succinyl-CoA is the natural CoA donor for CHC activation. This chain is Succinyl-CoA:cyclohexane-1-carboxylate CoA transferase, found in Geobacter metallireducens (strain ATCC 53774 / DSM 7210 / GS-15).